The following is a 610-amino-acid chain: Solute carrier family 2, facilitated glucose transporter member 12 (610 aa).

Residues 1–49 (MDAPEESIRMTSDPQSKIYVQNPDTHIHLEQGPSAKSGNGRALVLCSVS) are Cytoplasmic-facing. Residues 50-70 (VACLSGLLMGYEMSLISGALL) traverse the membrane as a helical segment. Residues 71 to 84 (QLRDVLTLSCPEQE) are Extracellular-facing. The chain crosses the membrane as a helical span at residues 85–105 (QVVGSLLLGAFLLSLGGGTIL). The Cytoplasmic portion of the chain corresponds to 106-118 (DHYGRRFTIILTA). A helical transmembrane segment spans residues 119 to 139 (LLCVLGTLLSVCVVSFWALVV). The Extracellular segment spans residues 140–141 (GR). A helical membrane pass occupies residues 142 to 162 (MLVGMSVALSGTASCLYAAEV). Residues 163–176 (APAAWRGRCVCVYE) lie on the Cytoplasmic side of the membrane. The helical transmembrane segment at 177–197 (LMVVLGMLLGFGLSWAFAGVP) threads the bilayer. The Extracellular portion of the chain corresponds to 198–201 (DGWR). A helical transmembrane segment spans residues 202–222 (FTFGGALLPALLQAGVMPLLP). Over 223 to 286 (DSPRFLLAQQ…FQSRDNMLQR (64 aa)) the chain is Cytoplasmic. The helical transmembrane segment at 287 to 307 (LLVGAALVFLQQATGQPNILA) threads the bilayer. Over 308-325 (YASTVLSSVGFHGNEAAT) the chain is Extracellular. The chain crosses the membrane as a helical span at residues 326–346 (LASTGFGVVKVGGTIPAIFLV). Residues 347–353 (DKVGPKA) are Cytoplasmic-facing. The chain crosses the membrane as a helical span at residues 354–374 (LLCVGVVVMMLSTATLGAITM). Residues 375–475 (QSRTHVSSLC…LHEVSPSLKW (101 aa)) lie on the Extracellular side of the membrane. Residues Asn392, Asn429, and Asn438 are each glycosylated (N-linked (GlcNAc...) asparagine). A helical transmembrane segment spans residues 476–496 (ISLVSLLVYVAGFSISLGPMV). The Cytoplasmic segment spans residues 497-511 (HVVLSAIFPTGIRGK). The chain crosses the membrane as a helical span at residues 512–532 (AVSVISAFNWATNLLISMTFL). The Extracellular segment spans residues 533 to 542 (TLTERIGLPT). The chain crosses the membrane as a helical span at residues 543–563 (VIFSYSAMSFLLVVFVIVFVP). Residues 564 to 610 (ETKGRSLEQISKELAMKNHLRGTLLCHRRKHKATAQPSQEEKALATV) lie on the Cytoplasmic side of the membrane.

The protein belongs to the major facilitator superfamily. Sugar transporter (TC 2.A.1.1) family. Glucose transporter subfamily. In terms of tissue distribution, expressed in the main insulin-sensitive tissues, such as cardiac muscle, skeletal muscle and adipose tissue.

The protein resides in the cell membrane. Its subcellular location is the endomembrane system. It localises to the cytoplasm. The protein localises to the perinuclear region. The enzyme catalyses D-glucose(out) = D-glucose(in). Functionally, insulin-regulated facilitative glucose transporter. The polypeptide is Solute carrier family 2, facilitated glucose transporter member 12 (Danio rerio (Zebrafish)).